We begin with the raw amino-acid sequence, 559 residues long: MSAHYTTEPPPTASATLHTTFGPIHIALFANQTPLTCKNFLQHCLDNYYAGTIFHRIVPDFIVQGGDPTGTGSGGTSIYEYPEFEYDPEARDPNEKVVLRDELHSRLRFNRRGLVGMAKSEDGTYGSQFFITLANAERELNGQCTLFGRVEGDSIYNVLKIAEAERVERTERPVYPVKVVSCEVGELGPFAGKLKRRETIATAPAAEEKPAAKKKKKAKGGKTLLSFGGDEGDEDVPLRPSKPKFNPTLVVDAGIPPANDAPKKTSPEAEQQTRKRPRSPSPRRSLSAERKHRPKTPDPLTQLPLPDPESPARSPPQSPPARQSILSRTRAEIENLKASMRRTVATGPADTGRKKSALEAMIPETAIRGRKRPPPGTVNGAGRGSSTNGVTGFSSAAEDETLRMFNAFKAKLESADAKSGPHGKTSISASDTTKYTSQAKSNTEPEDEEAQLCDLHFIANCQSCKSWDDTGTAEEAPDDDDRDWLTHELRFGKDMLGKDLQWKREHPDDVDSLVVIDPREREKEFVGGKRRGLERDRERDRKRERVGDQEWDRRRREKP.

Positions 11-184 constitute a PPIase cyclophilin-type domain; it reads PTASATLHTT…YPVKVVSCEV (174 aa). 3 disordered regions span residues 201 to 395, 413 to 449, and 518 to 559; these read ATAP…GFSS, ESAD…EDEE, and PRER…REKP. A compositionally biased stretch (basic and acidic residues) spans 261–273; it reads APKKTSPEAEQQT. The span at 305 to 319 shows a compositional bias: pro residues; the sequence is LPDPESPARSPPQSP. Composition is skewed to polar residues over residues 384 to 394 and 425 to 442; these read GSSTNGVTGFS and TSIS…AKSN.

The protein belongs to the cyclophilin-type PPIase family. CWC27 subfamily. Associated with the spliceosome.

It localises to the cytoplasm. The protein resides in the nucleus. The catalysed reaction is [protein]-peptidylproline (omega=180) = [protein]-peptidylproline (omega=0). Its function is as follows. PPIases accelerate the folding of proteins. It catalyzes the cis-trans isomerization of proline imidic peptide bonds in oligopeptides. Involved in pre-mRNA splicing. The chain is Peptidyl-prolyl isomerase cwc27 (cwc27) from Aspergillus fumigatus (strain ATCC MYA-4609 / CBS 101355 / FGSC A1100 / Af293) (Neosartorya fumigata).